The chain runs to 1025 residues: Dihydropyrimidine dehydrogenase [NADP(+)] (1025 aa).

The 4Fe-4S ferredoxin-type 1 domain maps to 69–100; sequence ERGALREAVRCLKCADAPCQKSCPTSLDIKSF. [4Fe-4S] cluster-binding residues include C79, C82, C87, and C91. FAD is bound at residue V129. Positions 130, 136, 140, and 156 each coordinate [4Fe-4S] cluster. Residues 194 to 198, 218 to 226, and R235 each bind FAD; these read GAGPA and EKQEYVGGL. Residues 340–343, 364–365, and R371 each bind NADP(+); these read AGDT and RK. N6-acetyllysine is present on K384. Residues 437–439 and 481–487 contribute to the NADP(+) site; these read PFG and DVVGMAN. Residue 480-489 participates in FAD binding; it reads GDVVGMANTT. FMN contacts are provided by residues S550 and 574-575; that span reads KT. Substrate-binding positions include N609 and 668 to 670; that span reads NLS. C671 functions as the Proton acceptor in the catalytic mechanism. An FMN-binding site is contributed by K709. 736-737 provides a ligand contact to substrate; it reads NT. Residues G767, 793-795, and 816-817 contribute to the FMN site; these read TGG and CS. S905 carries the post-translational modification Phosphoserine. 4Fe-4S ferredoxin-type domains follow at residues 944-976 and 978-1007; these read VVALIDEEMCINCGKCYMTCNDSGYQAIQFDPE and HLPTVSDTCTGCTLCLSVCPIMDCIRMVSR. C953, C956, C959, C963, C986, C989, C992, and C996 together coordinate [4Fe-4S] cluster.

Belongs to the dihydropyrimidine dehydrogenase family. Homodimer. Requires FAD as cofactor. The cofactor is FMN. [4Fe-4S] cluster serves as cofactor.

It is found in the cytoplasm. It carries out the reaction 5,6-dihydrouracil + NADP(+) = uracil + NADPH + H(+). It catalyses the reaction 5,6-dihydrothymine + NADP(+) = thymine + NADPH + H(+). It functions in the pathway amino-acid biosynthesis; beta-alanine biosynthesis. With respect to regulation, inactivated by 5-iodouracil. In terms of biological role, involved in pyrimidine base degradation. Catalyzes the reduction of uracil and thymine. Also involved the degradation of the chemotherapeutic drug 5-fluorouracil. The sequence is that of Dihydropyrimidine dehydrogenase [NADP(+)] from Rattus norvegicus (Rat).